Here is a 209-residue protein sequence, read N- to C-terminus: Large ribosomal subunit protein uL3 (209 aa).

A disordered region spans residues 125–148; the sequence is RHGQSRGPMAHGSRYHRRPGSMGP.

Belongs to the universal ribosomal protein uL3 family. As to quaternary structure, part of the 50S ribosomal subunit. Forms a cluster with proteins L14 and L19.

One of the primary rRNA binding proteins, it binds directly near the 3'-end of the 23S rRNA, where it nucleates assembly of the 50S subunit. In Lysinibacillus sphaericus (strain C3-41), this protein is Large ribosomal subunit protein uL3.